A 115-amino-acid polypeptide reads, in one-letter code: MIGIDIVKIDRVTSAKSKFKSKFIYKFLLSSEVALVKNDASLAGIWAAKEAASKALGCGIGAELSFLDIEIYKDKKGAPKLKFNENIVKKFNIKNTSLSITHDGGFAIAAVIVEN.

Residues aspartate 5 and glutamate 50 each coordinate Mg(2+).

It belongs to the P-Pant transferase superfamily. AcpS family. Requires Mg(2+) as cofactor.

The protein localises to the cytoplasm. The catalysed reaction is apo-[ACP] + CoA = holo-[ACP] + adenosine 3',5'-bisphosphate + H(+). In terms of biological role, transfers the 4'-phosphopantetheine moiety from coenzyme A to a Ser of acyl-carrier-protein. The sequence is that of Holo-[acyl-carrier-protein] synthase from Campylobacter fetus subsp. fetus (strain 82-40).